A 161-amino-acid polypeptide reads, in one-letter code: Phosphopantetheine adenylyltransferase (161 aa).

Ser11 contributes to the substrate binding site. ATP-binding positions include 11-12 and His19; that span reads SF. Positions 43, 75, and 89 each coordinate substrate. ATP contacts are provided by residues 90–92, Glu100, and 125–131; these read GLR and YSFISSS.

Belongs to the bacterial CoaD family. Homohexamer. The cofactor is Mg(2+).

The protein localises to the cytoplasm. It carries out the reaction (R)-4'-phosphopantetheine + ATP + H(+) = 3'-dephospho-CoA + diphosphate. The protein operates within cofactor biosynthesis; coenzyme A biosynthesis; CoA from (R)-pantothenate: step 4/5. Its function is as follows. Reversibly transfers an adenylyl group from ATP to 4'-phosphopantetheine, yielding dephospho-CoA (dPCoA) and pyrophosphate. This chain is Phosphopantetheine adenylyltransferase, found in Staphylococcus saprophyticus subsp. saprophyticus (strain ATCC 15305 / DSM 20229 / NCIMB 8711 / NCTC 7292 / S-41).